The primary structure comprises 635 residues: Threonine--tRNA ligase (635 aa).

Residues 1 to 61 enclose the TGS domain; that stretch reads MISIRLKDGS…KEDGCLELLD (61 aa). Residues 242–532 are catalytic; it reads DHRRLGRELG…LTEHFGGAFP (291 aa). Zn(2+) contacts are provided by C333, H384, and H509.

Belongs to the class-II aminoacyl-tRNA synthetase family. As to quaternary structure, homodimer. The cofactor is Zn(2+).

The protein resides in the cytoplasm. It carries out the reaction tRNA(Thr) + L-threonine + ATP = L-threonyl-tRNA(Thr) + AMP + diphosphate + H(+). In terms of biological role, catalyzes the attachment of threonine to tRNA(Thr) in a two-step reaction: L-threonine is first activated by ATP to form Thr-AMP and then transferred to the acceptor end of tRNA(Thr). Also edits incorrectly charged L-seryl-tRNA(Thr). The polypeptide is Threonine--tRNA ligase (Syntrophomonas wolfei subsp. wolfei (strain DSM 2245B / Goettingen)).